A 357-amino-acid polypeptide reads, in one-letter code: Protein FAM118A (357 aa).

At Met1 the chain carries N-acetylmethionine. A helical membrane pass occupies residues 30-46 (LLLVIGTGVSAAVAPGI). Position 311 is a phosphoserine (Ser311).

The protein belongs to the FAM118 family.

It is found in the membrane. The chain is Protein FAM118A (Fam118a) from Mus musculus (Mouse).